Here is a 262-residue protein sequence, read N- to C-terminus: ATP synthase subunit a 1 (262 aa).

The next 5 membrane-spanning stretches (helical) occupy residues 30 to 50, 91 to 111, 131 to 151, 201 to 221, and 232 to 252; these read TVHI…ILVF, IAPL…MDLI, IVPT…FALM, LFGN…LMPW, and AIFH…LTIV.

The protein belongs to the ATPase A chain family. As to quaternary structure, F-type ATPases have 2 components, CF(1) - the catalytic core - and CF(0) - the membrane proton channel. CF(1) has five subunits: alpha(3), beta(3), gamma(1), delta(1), epsilon(1). CF(0) has three main subunits: a(1), b(2) and c(9-12). The alpha and beta chains form an alternating ring which encloses part of the gamma chain. CF(1) is attached to CF(0) by a central stalk formed by the gamma and epsilon chains, while a peripheral stalk is formed by the delta and b chains.

It is found in the cell inner membrane. Functionally, key component of the proton channel; it plays a direct role in the translocation of protons across the membrane. This is ATP synthase subunit a 1 from Photobacterium profundum (strain SS9).